Consider the following 100-residue polypeptide: Envelope glycoprotein N (100 aa).

Residues 1–27 form the signal peptide; it reads MLSTRFVTLAILACLLVVLGLARGAGG. Topologically, residues 28–63 are virion surface; sequence DPGVKQRIDVAREEERRDFWHAACSGHGFPITTPST. Residues 64-84 form a helical membrane-spanning segment; sequence AAILFYVSLLAVGVAVACQAY. The Intravirion segment spans residues 85-100; the sequence is RAVLRIVTLEMLQHLH.

Belongs to the herpesviridae glycoprotein N family. Interacts (via N-terminus) with gM (via N-terminus). The gM-gN heterodimer forms the gCII complex.

Its subcellular location is the virion membrane. The protein localises to the host membrane. It localises to the host Golgi apparatus. The protein resides in the host trans-Golgi network. Its function is as follows. Envelope glycoprotein necessary for proper maturation of gM and modulation of its membrane fusion activity. Also plays a critical role in virion morphogenesis. The sequence is that of Envelope glycoprotein N from Equus caballus (Horse).